The chain runs to 302 residues: Small ribosomal subunit biogenesis GTPase RsgA (302 aa).

Positions 75–233 (KNELIRPAVS…IMDTPGFSSM (159 aa)) constitute a CP-type G domain. GTP contacts are provided by residues 124–127 (NKKD) and 175–183 (GPSGVGKSS). C257, C262, H264, and C270 together coordinate Zn(2+).

It belongs to the TRAFAC class YlqF/YawG GTPase family. RsgA subfamily. As to quaternary structure, monomer. Associates with 30S ribosomal subunit, binds 16S rRNA. Zn(2+) is required as a cofactor.

It localises to the cytoplasm. One of several proteins that assist in the late maturation steps of the functional core of the 30S ribosomal subunit. Helps release RbfA from mature subunits. May play a role in the assembly of ribosomal proteins into the subunit. Circularly permuted GTPase that catalyzes slow GTP hydrolysis, GTPase activity is stimulated by the 30S ribosomal subunit. This chain is Small ribosomal subunit biogenesis GTPase RsgA, found in Agathobacter rectalis (strain ATCC 33656 / DSM 3377 / JCM 17463 / KCTC 5835 / VPI 0990) (Eubacterium rectale).